The primary structure comprises 501 residues: ATP-dependent rRNA helicase RRP3 (501 aa).

The stretch at 3-44 (KIVKRKEKKANDELTSLAEKIRAKALENQKKLIEAEKEGGSE) forms a coiled coil. The tract at residues 36 to 79 (EAEKEGGSESDSEEDATAEKKKVLKSKSKSTVSTQNENTNEDES) is disordered. A phosphoserine mark is found at S43, S45, and S47. Residues 81–109 (ESFSELNLVPELIQACKNLNYSKPTPIQS) carry the Q motif motif. The 173-residue stretch at 112–284 (IPPALEGHDI…RASLTNPVKC (173 aa)) folds into the Helicase ATP-binding domain. 125–132 (AQTGSGKT) serves as a coordination point for ATP. A DEAD box motif is present at residues 231–234 (DEAD). Residues 307 to 461 (LKNTYLIYLL…NIILTLRDSV (155 aa)) form the Helicase C-terminal domain. A disordered region spans residues 480-501 (IARGKGRRGRMMTRENMDMGER). The segment covering 491-501 (MTRENMDMGER) has biased composition (basic and acidic residues).

It belongs to the DEAD box helicase family. DDX47/RRP3 subfamily. As to quaternary structure, interacts with the SSU processome.

It localises to the nucleus. It catalyses the reaction ATP + H2O = ADP + phosphate + H(+). Its function is as follows. ATP-dependent rRNA helicase required for pre-ribosomal RNA processing. Involved in the maturation of the 35S-pre-rRNA and to its cleavage to mature 18S rRNA. In Saccharomyces cerevisiae (strain YJM789) (Baker's yeast), this protein is ATP-dependent rRNA helicase RRP3.